Reading from the N-terminus, the 422-residue chain is Serine--tRNA ligase (422 aa).

229 to 231 lines the L-serine pocket; it reads TAE. 260–262 is an ATP binding site; that stretch reads RKE. An L-serine-binding site is contributed by Glu-283. 347–350 lines the ATP pocket; that stretch reads EISS. Position 383 (Ser-383) interacts with L-serine.

This sequence belongs to the class-II aminoacyl-tRNA synthetase family. Type-1 seryl-tRNA synthetase subfamily. Homodimer. The tRNA molecule binds across the dimer.

It localises to the cytoplasm. It carries out the reaction tRNA(Ser) + L-serine + ATP = L-seryl-tRNA(Ser) + AMP + diphosphate + H(+). It catalyses the reaction tRNA(Sec) + L-serine + ATP = L-seryl-tRNA(Sec) + AMP + diphosphate + H(+). The protein operates within aminoacyl-tRNA biosynthesis; selenocysteinyl-tRNA(Sec) biosynthesis; L-seryl-tRNA(Sec) from L-serine and tRNA(Sec): step 1/1. Its function is as follows. Catalyzes the attachment of serine to tRNA(Ser). Is also able to aminoacylate tRNA(Sec) with serine, to form the misacylated tRNA L-seryl-tRNA(Sec), which will be further converted into selenocysteinyl-tRNA(Sec). The chain is Serine--tRNA ligase from Geobacter sulfurreducens (strain ATCC 51573 / DSM 12127 / PCA).